The sequence spans 71 residues: Large ribosomal subunit protein bL31 (71 aa).

Residues Cys16, Cys18, Cys37, and Cys40 each coordinate Zn(2+).

This sequence belongs to the bacterial ribosomal protein bL31 family. Type A subfamily. Part of the 50S ribosomal subunit. It depends on Zn(2+) as a cofactor.

Binds the 23S rRNA. The chain is Large ribosomal subunit protein bL31 from Yersinia pseudotuberculosis serotype O:1b (strain IP 31758).